A 609-amino-acid chain; its full sequence is UvrABC system protein C (609 aa).

The GIY-YIG domain maps to 13–91; that stretch reads HEPGVYRMYD…IKLYQPRYNV (79 aa). The UVR domain maps to 201-236; sequence QQVLDYLIGKMEQASRNLDFEQAARYRDQIQAVRSV.

It belongs to the UvrC family. In terms of assembly, interacts with UvrB in an incision complex.

Its subcellular location is the cytoplasm. The UvrABC repair system catalyzes the recognition and processing of DNA lesions. UvrC both incises the 5' and 3' sides of the lesion. The N-terminal half is responsible for the 3' incision and the C-terminal half is responsible for the 5' incision. In Haemophilus influenzae (strain ATCC 51907 / DSM 11121 / KW20 / Rd), this protein is UvrABC system protein C.